A 1059-amino-acid polypeptide reads, in one-letter code: Endo-1,4-beta-xylanase A (1059 aa).

Positions 1-30 (MQVRKRRGLLDVSTAVLVGILAGFLGVVLA) are cleaved as a signal peptide. The interval 47 to 199 (SSLETVLALS…LDKVQVLAPK (153 aa)) is A-1. The tract at residues 200–354 (ESGPKVIYET…DDVKIVDTTS (155 aa)) is A-2. The 329-residue stretch at 364 to 692 (EKEIPALKEV…KLAYWAIVAP (329 aa)) folds into the GH10 domain. The Proton donor role is filled by Glu502. Catalysis depends on Glu608, which acts as the Nucleophile. CBM-cenC domains follow at residues 700–870 (KESR…LEGI) and 871–1059 (MVAT…RLIK).

Belongs to the glycosyl hydrolase 10 (cellulase F) family.

It catalyses the reaction Endohydrolysis of (1-&gt;4)-beta-D-xylosidic linkages in xylans.. The protein is Endo-1,4-beta-xylanase A (xynA) of Thermotoga maritima (strain ATCC 43589 / DSM 3109 / JCM 10099 / NBRC 100826 / MSB8).